We begin with the raw amino-acid sequence, 32 residues long: Phospholipase A2 (32 aa).

Tyr-16, Gly-18, and Gly-20 together coordinate Ca(2+).

It depends on Ca(2+) as a cofactor. In terms of tissue distribution, expressed by the venom gland.

It is found in the secreted. It catalyses the reaction a 1,2-diacyl-sn-glycero-3-phosphocholine + H2O = a 1-acyl-sn-glycero-3-phosphocholine + a fatty acid + H(+). Functionally, PLA2 catalyzes the calcium-dependent hydrolysis of the 2-acyl groups in 3-sn-phosphoglycerides. The protein is Phospholipase A2 of Micrurus lemniscatus (South American coral snake).